The sequence spans 88 residues: Putative membrane protein insertion efficiency factor (88 aa).

The segment at 68 to 88 (VPPPNSDTRARGEADARSHRL) is disordered. A compositionally biased stretch (basic and acidic residues) spans 75–88 (TRARGEADARSHRL).

The protein belongs to the UPF0161 family.

The protein resides in the cell inner membrane. Its function is as follows. Could be involved in insertion of integral membrane proteins into the membrane. The polypeptide is Putative membrane protein insertion efficiency factor (Burkholderia ambifaria (strain MC40-6)).